The sequence spans 521 residues: Exoglucanase 1 (521 aa).

Residues Met1–Ala17 form the signal peptide. Positions Gln18–Gly450 are catalytic. Asn32 is a glycosylation site (N-linked (GlcNAc...) asparagine). Residue Glu229 is the Nucleophile of the active site. The Proton donor role is filled by Glu234. A glycan (N-linked (GlcNAc...) asparagine) is linked at Asn287. The tract at residues Thr447–Gly486 is disordered. The interval Gly451–Thr485 is linker. Residues Thr485–Val521 enclose the CBM1 domain. Disulfide bonds link Cys493-Cys510 and Cys504-Cys520.

It belongs to the glycosyl hydrolase 7 (cellulase C) family.

It is found in the secreted. It catalyses the reaction Hydrolysis of (1-&gt;4)-beta-D-glucosidic linkages in cellulose and cellotetraose, releasing cellobiose from the non-reducing ends of the chains.. This is Exoglucanase 1 (cbh-1) from Neurospora crassa (strain ATCC 24698 / 74-OR23-1A / CBS 708.71 / DSM 1257 / FGSC 987).